Consider the following 231-residue polypeptide: ADP-ribose pyrophosphatase (231 aa).

An N-acetylserine modification is found at Phe-2. Substrate is bound by residues Trp-46, Trp-64 to Asp-65, Arg-69, and Arg-103. The region spanning Gly-75–Arg-214 is the Nudix hydrolase domain. Ala-115 provides a ligand contact to Mg(2+). The short motif at Gly-116–Gly-137 is the Nudix box element. Position 117 (Leu-117) interacts with substrate. 2 residues coordinate Mg(2+): Glu-131 and Glu-135. Residue Asp-152 coordinates substrate. Mg(2+) is bound at residue Glu-185.

The protein belongs to the Nudix hydrolase family. NudF subfamily. It depends on Mg(2+) as a cofactor. The cofactor is Mn(2+).

The catalysed reaction is ADP-D-ribose + H2O = D-ribose 5-phosphate + AMP + 2 H(+). The chain is ADP-ribose pyrophosphatase (YSA1) from Saccharomyces cerevisiae (strain ATCC 204508 / S288c) (Baker's yeast).